The sequence spans 29 residues: ShK homolog Ask132958 (29 aa).

A ShKT domain is found at 1 to 29 (CENTISGCSRADCLLTHRKQGCQKTCGLC). 3 cysteine pairs are disulfide-bonded: C1-C29, C8-C22, and C13-C26.

This sequence belongs to the sea anemone type 1 potassium channel toxin family. Type 1a subfamily.

The protein resides in the secreted. Its subcellular location is the nematocyst. Its function is as follows. This peptide is similar to the potassium channel toxin ShK, but does not show activity on potassium channels. It appears that Lys-19, which is expected to occupy the pore of the channel, is not sufficiently accessible for binding, and therefore that this peptide must have a distinct functional role that does not involve potassium channels. It is noteworthy that this peptide is much more stable in the presence of trypsin, chymotrypsin and pepsin than the toxin ShK. The sequence is that of ShK homolog Ask132958 from Anemonia sulcata (Mediterranean snakelocks sea anemone).